The chain runs to 460 residues: Phosphoenolpyruvate carboxylase (460 aa).

This sequence belongs to the PEPCase type 2 family. Homotetramer. Requires Mg(2+) as cofactor.

It carries out the reaction oxaloacetate + phosphate = phosphoenolpyruvate + hydrogencarbonate. Functionally, catalyzes the irreversible beta-carboxylation of phosphoenolpyruvate (PEP) to form oxaloacetate (OAA), a four-carbon dicarboxylic acid source for the tricarboxylic acid cycle. The polypeptide is Phosphoenolpyruvate carboxylase (Pyrobaculum arsenaticum (strain DSM 13514 / JCM 11321 / PZ6)).